The chain runs to 648 residues: Sodium/nucleoside cotransporter 1 (648 aa).

The Cytoplasmic portion of the chain corresponds to 1 to 80 (MADNTQRQRE…ARSFCREHRQ (80 aa)). A helical transmembrane segment spans residues 81 to 104 (LFGWICKGLLSTACLGFLMVACLL). Residues 105–109 (DLQRA) lie on the Extracellular side of the membrane. A helical membrane pass occupies residues 110-128 (LALLIITCVVLVFLAYDLL). The Cytoplasmic segment spans residues 129–147 (KRLLGSKLRRCVKFQGHSC). Residues 148–167 (LSLWLKRGLALAAGVGLILW) traverse the membrane as a helical segment. The Extracellular portion of the chain corresponds to 168–178 (LSLDTAQRPEQ). Residues 179 to 195 (LVSFAGICVFLVLLFAG) traverse the membrane as a helical segment. Over 196 to 201 (SKHHRA) the chain is Cytoplasmic. A helical membrane pass occupies residues 202–222 (VSWRAVSWGLGLQFVLGLFVI). Over 223-261 (RTEPGFIAFQWLGDQIQVFLSYTEAGSSFVFGEALVKDV) the chain is Extracellular. The chain crosses the membrane as a helical span at residues 262 to 283 (FAFQVLPIIIFFSCVMSVLYYL). Over 284–294 (GLMQWVILKIA) the chain is Cytoplasmic. Residues 295-318 (WLMQVTMGTSATETLSVAGNIFVS) form a helical membrane-spanning segment. The Extracellular portion of the chain corresponds to 319 to 337 (QTEAPLLIRPYLADMTLSE). Residues 338 to 360 (VHVVMTGGYATIAGSLLGAYISF) traverse the membrane as a helical segment. The Cytoplasmic portion of the chain corresponds to 361 to 366 (GIDAAS). A helical transmembrane segment spans residues 367–386 (LIAASVMAAPCALALSKLVY). At 387 to 423 (PEVEESKFRSENGVKLTYGDAQNLLEAASAGAAISVK) the chain is on the extracellular side. The chain crosses the membrane as a helical span at residues 424–446 (VVANIAANLIAFLAVLAFVNAAL). At 447-457 (SWLGDMVDIQG) the chain is on the cytoplasmic side. A helical transmembrane segment spans residues 458-479 (LSFQLICSYVLRPVAFLMGVAW). The Extracellular segment spans residues 480–534 (EDCPVVAELLGIKFFLNEFVAYQELSQYKQRRLAGAEEWLGDKKQWISVRAEILT). Residues 535–558 (TYALCGFANFSSIGIMLGGLTSLV) traverse the membrane as a helical segment. At 559–569 (PQRRSDFSQIV) the chain is on the cytoplasmic side. The helical transmembrane segment at 570–592 (LRALITGAFVSLLNACVAGILYV) threads the bilayer. Residues 593–648 (PRGVEVDCVSLLNQTVSSSSFEVYLCCRQVFQSTSSEFSQVALDNCCRFYNHTVCT) are Extracellular-facing. Asn605 and Asn643 each carry an N-linked (GlcNAc...) asparagine glycan.

This sequence belongs to the concentrative nucleoside transporter (CNT) (TC 2.A.41) family. Post-translationally, N-glycosylated. N-glycosylation is required for localization to the plasma membrane and the transporter activity. As to expression, expressed predominantly in the brush-border membranes of the polarized epithelial cells of jejunum and renal cortical tubules and in the bile canalicular membranes of liver parenchymal cells.

It is found in the cell membrane. The protein resides in the apical cell membrane. The catalysed reaction is uridine(out) + Na(+)(out) = uridine(in) + Na(+)(in). It carries out the reaction thymidine(out) + Na(+)(out) = thymidine(in) + Na(+)(in). The enzyme catalyses cytidine(out) + Na(+)(out) = cytidine(in) + Na(+)(in). It catalyses the reaction adenosine(out) + Na(+)(out) = adenosine(in) + Na(+)(in). With respect to regulation, due to its high apparent affinity but slow transport, adenosine could act as a negative regulator of pyrimidine transport under some conditions. Its function is as follows. Sodium and pyrimidine nucleoside symporter of the plasma membrane that imports uridine, thymidine and cytidine into cells by coupling their transport to the transmembrane sodium electrochemical gradient. Also transports adenosine, an atypical substrate transported with high apparent affinity, but low maximum velocity. Therefore, exhibits the transport characteristics of the nucleoside transport system cit or N2 subtype (N2/cit). Involved in renal nucleoside (re)absorption. The polypeptide is Sodium/nucleoside cotransporter 1 (Rattus norvegicus (Rat)).